The chain runs to 458 residues: Protochlorophyllide reductase, chloroplastic (458 aa).

The protein belongs to the short-chain dehydrogenases/reductases (SDR) family. POR subfamily.

The protein localises to the plastid. The protein resides in the chloroplast. The catalysed reaction is chlorophyllide a + NADP(+) = protochlorophyllide a + NADPH + H(+). Its pathway is porphyrin-containing compound metabolism; chlorophyll biosynthesis. In terms of biological role, phototransformation of protochlorophyllide (Pchlide) to chlorophyllide (Chlide). The sequence is that of Protochlorophyllide reductase, chloroplastic (PORA) from Marchantia paleacea (Liverwort).